Reading from the N-terminus, the 175-residue chain is Nicotinamide-nucleotide adenylyltransferase 1 (175 aa).

Belongs to the archaeal NMN adenylyltransferase family.

The protein localises to the cytoplasm. It catalyses the reaction beta-nicotinamide D-ribonucleotide + ATP + H(+) = diphosphate + NAD(+). It functions in the pathway cofactor biosynthesis; NAD(+) biosynthesis; NAD(+) from nicotinamide D-ribonucleotide: step 1/1. This is Nicotinamide-nucleotide adenylyltransferase 1 from Sulfolobus acidocaldarius (strain ATCC 33909 / DSM 639 / JCM 8929 / NBRC 15157 / NCIMB 11770).